Consider the following 76-residue polypeptide: Brevinin-2ISa (76 aa).

The signal sequence occupies residues 1–22 (MFNMKKSLLLLFFLGTISLSLC). Positions 23–41 (EEERDADEDDGVEMTEEEV) are cleaved as a propeptide — removed in mature form. Cysteines 70 and 76 form a disulfide.

Expressed by the skin glands.

The protein resides in the secreted. Functionally, has antimicrobial activity against Gram-negative bacterium E.coli ATCC 8739 (MIC=50 ug), against Gram positive bacteria S.aureus ATCC 6538 (MIC=12.5 ug), methicillin-resistant S.aureus ATCC 43300 (MIC=100 ug) and B.subtilis ATCC 6633 (MIC=12.5 ug). Has no activity against fungus C.albicans ATCC 90028. This chain is Brevinin-2ISa, found in Odorrana ishikawae (Ishikawa's frog).